The sequence spans 413 residues: NAD-dependent dihydropyrimidine dehydrogenase subunit PreT (413 aa).

Glutamate 287 lines the NAD(+) pocket.

It belongs to the NADH dehydrogenase family. In terms of assembly, heterotetramer of 2 PreA and 2 PreT subunits.

The catalysed reaction is 5,6-dihydrouracil + NAD(+) = uracil + NADH + H(+). It carries out the reaction 5,6-dihydrothymine + NAD(+) = thymine + NADH + H(+). Functionally, involved in pyrimidine base degradation. Catalyzes physiologically the reduction of uracil to 5,6-dihydrouracil (DHU) by using NADH as a specific cosubstrate. It also catalyzes the reverse reaction and the reduction of thymine to 5,6-dihydrothymine (DHT). This is NAD-dependent dihydropyrimidine dehydrogenase subunit PreT (preT) from Salmonella typhimurium (strain LT2 / SGSC1412 / ATCC 700720).